A 124-amino-acid polypeptide reads, in one-letter code: Small ribosomal subunit protein uS12 (124 aa).

D90 bears the 3-methylthioaspartic acid mark.

This sequence belongs to the universal ribosomal protein uS12 family. As to quaternary structure, part of the 30S ribosomal subunit. Contacts proteins S8 and S17. May interact with IF1 in the 30S initiation complex.

Its function is as follows. With S4 and S5 plays an important role in translational accuracy. In terms of biological role, interacts with and stabilizes bases of the 16S rRNA that are involved in tRNA selection in the A site and with the mRNA backbone. Located at the interface of the 30S and 50S subunits, it traverses the body of the 30S subunit contacting proteins on the other side and probably holding the rRNA structure together. The combined cluster of proteins S8, S12 and S17 appears to hold together the shoulder and platform of the 30S subunit. This is Small ribosomal subunit protein uS12 from Wolbachia sp. subsp. Drosophila simulans (strain wRi).